The primary structure comprises 258 residues: Phosphate import ATP-binding protein PstB (258 aa).

Positions 5 to 247 (IETKDLDIYY…ERIFSNPKEK (243 aa)) constitute an ABC transporter domain. Position 37-44 (37-44 (GPSGCGKS)) interacts with ATP.

Belongs to the ABC transporter superfamily. Phosphate importer (TC 3.A.1.7) family. The complex is composed of two ATP-binding proteins (PstB), two transmembrane proteins (PstC and PstA) and a solute-binding protein (PstS).

It is found in the cell membrane. The catalysed reaction is phosphate(out) + ATP + H2O = ADP + 2 phosphate(in) + H(+). Part of the ABC transporter complex PstSACB involved in phosphate import. Responsible for energy coupling to the transport system. The chain is Phosphate import ATP-binding protein PstB from Cutibacterium acnes (strain DSM 16379 / KPA171202) (Propionibacterium acnes).